Here is a 277-residue protein sequence, read N- to C-terminus: Putative envelope-preserving system protein Rv2742c (277 aa).

The span at 31 to 54 shows a compositional bias: basic and acidic residues; that stretch reads RDENRQRHAQVDVQRRRDQPERGQ. 3 disordered regions span residues 31–70, 113–133, and 180–210; these read RDEN…PDGR, QGSP…RLGR, and RQGS…HTAD. Residues 116–133 show a composition bias toward basic residues; the sequence is PRRRERRRGQTAHQRLGR.

In terms of assembly, interacts with Rv2743c.

In terms of biological role, involved in preservation of envelope integrity and tolerance to surface stress. Reverses the inhibitory effect of PspA on ClgR activity. Facilitates intracellular growth of M.tuberculosis. This chain is Putative envelope-preserving system protein Rv2742c, found in Mycobacterium tuberculosis (strain ATCC 25618 / H37Rv).